The sequence spans 76 residues: Precursor of CEP7 (76 aa).

An N-terminal signal peptide occupies residues 1–27; the sequence is MAKCTLTSLILLLIVLVLIQESHIVEG. A propeptide spanning residues 28–61 is cleaved from the precursor; sequence RPLKSSRISNVSKKFAAGNSNLSSKLTTEDHSLD. N37 and N48 each carry an N-linked (GlcNAc...) asparagine glycan. Positions 49–76 are disordered; that stretch reads LSSKLTTEDHSLDAFRPTNPGNSPGIGH. 3 positions are modified to hydroxyproline: P65, P68, and P72.

This sequence belongs to the C-terminally encoded plant signaling peptide (CEP) family. In terms of assembly, interacts with CEP receptors (e.g. CEPR1 and CEPR2). In terms of processing, the mature small signaling peptide is generated by proteolytic processing of the longer precursor.

Its subcellular location is the secreted. The protein resides in the extracellular space. It is found in the apoplast. Extracellular signaling peptide that may regulate primary root growth rate and systemic nitrogen (N)-demand signaling. Mediates up-regulation of genes involved in N uptake and assimilation pathways. In Arabidopsis thaliana (Mouse-ear cress), this protein is Precursor of CEP7.